The chain runs to 466 residues: tRNA-2-methylthio-N(6)-dimethylallyladenosine synthase (466 aa).

Positions 22-139 (RRYYVWTVGC…VVALAPNPIY (118 aa)) constitute an MTTase N-terminal domain. [4Fe-4S] cluster-binding residues include cysteine 31, cysteine 67, cysteine 101, cysteine 166, cysteine 170, and cysteine 173. The Radical SAM core domain maps to 152–386 (SHPPVSVHVP…EQLQEQIATE (235 aa)). In terms of domain architecture, TRAM spans 389 to 449 (ARFLGQTVEV…PWSLQGVPQL (61 aa)).

It belongs to the methylthiotransferase family. MiaB subfamily. As to quaternary structure, monomer. [4Fe-4S] cluster is required as a cofactor.

It is found in the cytoplasm. The enzyme catalyses N(6)-dimethylallyladenosine(37) in tRNA + (sulfur carrier)-SH + AH2 + 2 S-adenosyl-L-methionine = 2-methylsulfanyl-N(6)-dimethylallyladenosine(37) in tRNA + (sulfur carrier)-H + 5'-deoxyadenosine + L-methionine + A + S-adenosyl-L-homocysteine + 2 H(+). Functionally, catalyzes the methylthiolation of N6-(dimethylallyl)adenosine (i(6)A), leading to the formation of 2-methylthio-N6-(dimethylallyl)adenosine (ms(2)i(6)A) at position 37 in tRNAs that read codons beginning with uridine. The polypeptide is tRNA-2-methylthio-N(6)-dimethylallyladenosine synthase (Chloroflexus aurantiacus (strain ATCC 29366 / DSM 635 / J-10-fl)).